Consider the following 105-residue polypeptide: Gastrin/cholecystokinin-like peptide (105 aa).

The N-terminal stretch at 1–20 (MKTKVFLGLILSAAVTACLC) is a signal peptide. Positions 21–38 (RPAAKAPGGSHRPTSSLA) are excised as a propeptide. Residues 24-51 (AKAPGGSHRPTSSLARRDWPEPPSQEQQ) are disordered. Position 87 is a sulfotyrosine (Y87). F93 carries the post-translational modification Phenylalanine amide. Residues 97–105 (STEDAADAA) constitute a propeptide that is removed on maturation.

The protein belongs to the gastrin/cholecystokinin family.

The protein localises to the secreted. Its function is as follows. Potent stimulus of gastric acid, but not of pancreatic secretion. This Gallus gallus (Chicken) protein is Gastrin/cholecystokinin-like peptide.